Here is a 224-residue protein sequence, read N- to C-terminus: Uracil-DNA glycosylase (224 aa).

The active-site Proton acceptor is aspartate 64.

It belongs to the uracil-DNA glycosylase (UDG) superfamily. UNG family.

It is found in the cytoplasm. It catalyses the reaction Hydrolyzes single-stranded DNA or mismatched double-stranded DNA and polynucleotides, releasing free uracil.. In terms of biological role, excises uracil residues from the DNA which can arise as a result of misincorporation of dUMP residues by DNA polymerase or due to deamination of cytosine. This chain is Uracil-DNA glycosylase, found in Geobacillus sp. (strain WCH70).